Here is a 426-residue protein sequence, read N- to C-terminus: Serine hydroxymethyltransferase (426 aa).

(6S)-5,6,7,8-tetrahydrofolate contacts are provided by residues Leu122 and 126–128; that span reads GHL. Lys231 is subject to N6-(pyridoxal phosphate)lysine.

It belongs to the SHMT family. As to quaternary structure, homodimer. Requires pyridoxal 5'-phosphate as cofactor.

Its subcellular location is the cytoplasm. The catalysed reaction is (6R)-5,10-methylene-5,6,7,8-tetrahydrofolate + glycine + H2O = (6S)-5,6,7,8-tetrahydrofolate + L-serine. It participates in one-carbon metabolism; tetrahydrofolate interconversion. The protein operates within amino-acid biosynthesis; glycine biosynthesis; glycine from L-serine: step 1/1. In terms of biological role, catalyzes the reversible interconversion of serine and glycine with tetrahydrofolate (THF) serving as the one-carbon carrier. This reaction serves as the major source of one-carbon groups required for the biosynthesis of purines, thymidylate, methionine, and other important biomolecules. Also exhibits THF-independent aldolase activity toward beta-hydroxyamino acids, producing glycine and aldehydes, via a retro-aldol mechanism. The chain is Serine hydroxymethyltransferase from Koribacter versatilis (strain Ellin345).